We begin with the raw amino-acid sequence, 570 residues long: Pantothenate kinase 2, mitochondrial (570 aa).

Residues 1–31 (MRRLGPFHPRVHWAAPPSLSSGLHRLLFLRG) constitute a mitochondrion transit peptide. Disordered regions lie at residues 34-94 (IPSS…PRAR) and 127-198 (GRLG…SVSR). A Nucleolar localization signal motif is present at residues 82-94 (RWRNGRGGRPRAR). The segment covering 84–93 (RNGRGGRPRA) has biased composition (basic residues). A compositionally biased stretch (basic and acidic residues) spans 155-164 (PEGRRQEPLR). A phosphoserine mark is found at Ser168, Ser169, and Ser189. Positions 168–179 (SSASVPAVGASA) are enriched in low complexity. Residues 268–275 (LELKDLTL) carry the Nuclear export signal motif. Catalysis depends on Glu338, which acts as the Proton acceptor. Ser392, Ser395, and Arg407 together coordinate acetyl-CoA.

This sequence belongs to the type II pantothenate kinase family. In terms of assembly, homodimer. Post-translationally, synthesized as a 62-kDa precursor which is proteolytically processed by the mitochondrial-processing peptidase (MPP) via a 59-kDa intermediate to yield the mature mitochondrial 48-kDa subunit. Expressed in the brain (at protein level). Ubiquitous. Highly expressed in the testis. Expressed in the umbilical vein endothelial cells (HUVEC).

The protein resides in the mitochondrion. It localises to the mitochondrion intermembrane space. Its subcellular location is the nucleus. It is found in the cytoplasm. It carries out the reaction (R)-pantothenate + ATP = (R)-4'-phosphopantothenate + ADP + H(+). It functions in the pathway cofactor biosynthesis; coenzyme A biosynthesis; CoA from (R)-pantothenate: step 1/5. Strongly inhibited by acetyl-CoA and its thioesters. Activated by palmitoylcarnitine. In terms of biological role, mitochondrial isoform that catalyzes the phosphorylation of pantothenate to generate 4'-phosphopantothenate in the first and rate-determining step of coenzyme A (CoA) synthesis. Required for angiogenic activity of umbilical vein of endothelial cells (HUVEC). Cytoplasmic isoform that catalyzes the phosphorylation of pantothenate to generate 4'-phosphopantothenate in the first and rate-determining step of coenzyme A (CoA) synthesis. The chain is Pantothenate kinase 2, mitochondrial (PANK2) from Homo sapiens (Human).